A 1028-amino-acid polypeptide reads, in one-letter code: Multidrug resistance protein MdtC (1028 aa).

The next 12 membrane-spanning stretches (helical) occupy residues 3-23 (FFALFIYRPVATILISIAITL), 333-353 (EVEQTLVISVALVILVVFLFL), 360-380 (LIPAVAVPVSLIGTFAAMYLC), 387-407 (LSLMALTIATGFVVDDAIVVL), 431-451 (VGFTVLSMSLSLVAVFLPLLL), 463-483 (FAVTLSVAIGISLLVSLTLTP), 528-548 (LVGVVLLGTIALNIWLYISIP), 853-873 (VILILAAIATVYIVLGILYES), 875-895 (VHPLTILSTLPSAGVGALLAL), 897-917 (LFNAPFSLIALIGIMLLIGIV), 953-973 (PIMMTTLAALFGALPLVISGG), and 984-1004 (ITIVGGLVMSQLLTLYTTPVV).

The protein belongs to the resistance-nodulation-cell division (RND) (TC 2.A.6) family. MdtC subfamily. As to quaternary structure, part of a tripartite efflux system composed of MdtA, MdtB and MdtC. MdtC forms a heteromultimer with MdtB.

The protein resides in the cell inner membrane. The chain is Multidrug resistance protein MdtC from Citrobacter koseri (strain ATCC BAA-895 / CDC 4225-83 / SGSC4696).